Here is a 450-residue protein sequence, read N- to C-terminus: Probable glycylpeptide N-tetradecanoyltransferase (450 aa).

A disordered region spans residues 1 to 28; the sequence is MSHGHSHDGAPCGGHHGDDGAGGSRPSV. Tetradecanoyl-CoA contacts are provided by Gln67, Phe68, Trp69, Phe200, Leu201, Cys202, Val203, Ser209, Arg211, Val212, and Ala213.

Belongs to the NMT family.

The protein resides in the cytoplasm. The enzyme catalyses N-terminal glycyl-[protein] + tetradecanoyl-CoA = N-tetradecanoylglycyl-[protein] + CoA + H(+). Adds a myristoyl group to the N-terminal glycine residue of certain cellular proteins. This is Probable glycylpeptide N-tetradecanoyltransferase (nmt-1) from Caenorhabditis elegans.